The chain runs to 486 residues: E3 ubiquitin-protein ligase TRIM50 (486 aa).

The RING-type zinc finger occupies 16 to 57 (CPVCLEVFKEPLMLQCGHSYCKGCLLSLSRHLDSELRCPVCR). A B box-type zinc finger spans residues 84–125 (PEPQVCTHHRNPLSLFCEKDQELICGLCGLLGSHQHHRVTPV). Positions 89, 92, 111, and 117 each coordinate Zn(2+). Coiled coils occupy residues 125–170 (VSTV…ESDV) and 204–235 (LVAS…FGNE). A B30.2/SPRY domain is found at 275 to 474 (DIKLTVWKRL…LPMVLPLPSG (200 aa)). The residue at position 372 (lysine 372) is an N6-acetyllysine.

The protein belongs to the TRIM/RBCC family. In terms of assembly, can form dimers and trimers. Interacts with several E2 ubiquitin-conjugating enzymes, including UBE2L6, UBE2E1, UBE2E3. No interaction with UBE2H. Interacts with BECN1. Interacts with SQSTM1. Interacts with NLRP3. Auto-ubiquitinated. In terms of processing, acetylated by EP300 and KAT2B. HDAC6 drives TRIM50 deacetylation. Acetylation antagonizes with TRIM50 ubiquitination.

Its subcellular location is the cytoplasm. It carries out the reaction S-ubiquitinyl-[E2 ubiquitin-conjugating enzyme]-L-cysteine + [acceptor protein]-L-lysine = [E2 ubiquitin-conjugating enzyme]-L-cysteine + N(6)-ubiquitinyl-[acceptor protein]-L-lysine.. E3 ubiquitin-protein ligase that ubiquitinates Beclin-1/BECN1 in a 'Lys-63'-dependent manner enhancing its binding to ULK1. In turn, promotes starvation-induced autophagy activation. Also interacts with p62/SQSTM1 protein and thereby induces the formation and the autophagy clearance of aggresome-associated polyubiquitinated proteins through HDAC6 interaction. Also promotes NLRP3 inflammasome activation by directly inducing NLRP3 oligomerization independent of its E3 ligase function. This is E3 ubiquitin-protein ligase TRIM50 (TRIM50) from Sus scrofa (Pig).